A 636-amino-acid polypeptide reads, in one-letter code: Tumor protein p73 (636 aa).

A transactivation region spans residues 1-46 (MAQSTATSPDGGTTFEHLWSSLEPDSTYFDLPQSSRGNNEVVGGTD). A Phosphothreonine; by PLK1 modification is found at Thr-27. Residue Tyr-28 is modified to Phosphotyrosine; by SRC and HCK. Residues 78–104 (RAASASPYTPEHAASVPTHSPYAQPSS) form a disordered region. A compositionally biased stretch (polar residues) spans 94 to 104 (PTHSPYAQPSS). Tyr-99 is subject to Phosphotyrosine; by ABL1. The segment at 131-310 (FQQSSTAKSA…DRKADEDHYR (180 aa)) is DNA-binding. Residues Cys-194, His-197, Cys-258, and Cys-262 each coordinate Zn(2+). Residues 314–345 (ALNESSAKNGAASKRAFKQSPPAVPALGAGVK) form a disordered region. Residues 345–380 (KKRRHGDEDTYYLQVRGRENFEILMKLKESLELMEL) form an interaction with HIPK2 region. The tract at residues 345 to 386 (KKRRHGDEDTYYLQVRGRENFEILMKLKESLELMELVPQPLV) is oligomerization. The short motif at 483–487 (PPPPY) is the PPxY motif element. The SAM domain maps to 485–551 (PPYHADPSLV…WRGLQDLKQG (67 aa)). Lys-627 is covalently cross-linked (Glycyl lysine isopeptide (Lys-Gly) (interchain with G-Cter in SUMO); in isoform Alpha). Residue Lys-627 forms a Glycyl lysine isopeptide (Lys-Gly) (interchain with G-Cter in SUMO2) linkage.

Belongs to the p53 family. As to quaternary structure, found in a complex with p53/TP53 and CABLES1. The C-terminal oligomerization domain binds to the ABL1 tyrosine kinase SH3 domain. Interacts with HECW2. Isoform Beta interacts homotypically and with p53/TP53, whereas isoform Alpha does not. Isoform Gamma interacts homotypically and with all p73 isoforms. Isoform Delta interacts with isoform Gamma, isoform Alpha, and homotypically. Isoforms Alpha and Beta interact with HIPK2. Isoform Alpha interacts with RANBP9. Isoform Beta interacts with WWOX. Interacts (via SAM domain) with FBXO45 (via B30.2/SPRY domain). Interacts with YAP1 (phosphorylated form). Interacts with HCK (via SH3 domain); this inhibits TP73 activity and degradation. Interacts (via SAM domain) with NQO1; this interaction is NADH-dependent, stabilizes TP73 in response to oxidative stress and protects it from ubiquitin-independent degradation by the 20S proteasome. (Microbial infection) Interacts with Epstein-Barr virus protein EBNA6; this interaction inhibits TP73-mediated apoptotic pathway. Zn(2+) serves as cofactor. In terms of processing, isoform alpha (but not isoform beta) is sumoylated on Lys-627, which potentiates proteasomal degradation but does not affect transcriptional activity. Phosphorylation by PLK1 and PLK3 inhibits the transcription regulator activity and pro-apoptotic function. Post-translationally, higher levels of phosphorylation seen in the brain from patients with Huntington disease. Polyubiquitinated by RCHY1/PIRH2; leading to its degradation by the proteasome. As to expression, expressed in striatal neurons of patients with Huntington disease (at protein level). Brain, kidney, placenta, colon, heart, liver, spleen, skeletal muscle, prostate, thymus and pancreas. Highly expressed in fetal tissue. Expressed in the respiratory epithelium.

It localises to the nucleus. It is found in the cytoplasm. Participates in the apoptotic response to DNA damage. Isoforms containing the transactivation domain are pro-apoptotic, isoforms lacking the domain are anti-apoptotic and block the function of p53 and transactivating p73 isoforms. May be a tumor suppressor protein. Is an activator of FOXJ1 expression. It is an essential factor for the positive regulation of lung ciliated cell differentiation. This is Tumor protein p73 (TP73) from Homo sapiens (Human).